A 244-amino-acid polypeptide reads, in one-letter code: MMKQSPFSLLTSIFLIAALFTATTALDPAPEDPIFELYMHDILGGSSPTARPITGLLGNIYNGQVPFAKQIGFVPPQNGVAIPNANGAMPTVNGINGIPLGTGLSGTAFSGQNLNGIQTQLGPDGLSLGFGTITVIDDIITSGPDLGSQPLGKAQGVYVASSADGSTQMMAFTAMLEGGEYNDNLNFYGIYRIGSAMSHLSVTGGTGRFKNACGFAEVRPLIPAGQHFVDGAEMLLRIIVHLKY.

A signal peptide spans 1 to 25; sequence MMKQSPFSLLTSIFLIAALFTATTA.

Belongs to the plant dirigent protein family. As to quaternary structure, homodimer.

It localises to the secreted. It is found in the extracellular space. The protein localises to the apoplast. Dirigent proteins impart stereoselectivity on the phenoxy radical-coupling reaction, yielding optically active lignans from two molecules of coniferyl alcohol in the biosynthesis of lignans, flavonolignans, and alkaloids and thus plays a central role in plant secondary metabolism. This is Dirigent protein 18 (DIR18) from Arabidopsis thaliana (Mouse-ear cress).